The sequence spans 118 residues: Ribulose bisphosphate carboxylase small subunit (118 aa).

The protein belongs to the RuBisCO small chain family. Heterohexadecamer of 8 large and 8 small subunits.

It localises to the carboxysome. RuBisCO catalyzes two reactions: the carboxylation of D-ribulose 1,5-bisphosphate, the primary event in carbon dioxide fixation, as well as the oxidative fragmentation of the pentose substrate in the photorespiration process. Both reactions occur simultaneously and in competition at the same active site. Although the small subunit is not catalytic it is essential for maximal activity. The protein is Ribulose bisphosphate carboxylase small subunit of Thermosynechococcus vestitus (strain NIES-2133 / IAM M-273 / BP-1).